Reading from the N-terminus, the 75-residue chain is Signaling peptide TAXIMIN 1 (75 aa).

Positions 1 to 29 (MCDGDCRPLGFLLGLPFAFLSLLLSIIGV) are cleaved as a signal peptide.

Expressed in shoot apical meristems (SAM); mostly specific to the L1 layer in the center of the meristem but also detected in the L2 layer in organ primordia. Also observed in the vasculature of seedling roots.

It is found in the secreted. Counteracted by the antibiotic cefotaxime during responses to light stress. In terms of biological role, signaling peptide involved in the regulation of lateral organs separation, including fruits and leaves. Involved in the perception of and response to light stress via the control of sinapoyl-malate accumulation, a UV-B protecting compound. The protein is Signaling peptide TAXIMIN 1 of Arabidopsis thaliana (Mouse-ear cress).